The chain runs to 299 residues: Oxygen-dependent coproporphyrinogen-III oxidase (299 aa).

Serine 92 is a substrate binding site. The a divalent metal cation site is built by histidine 96 and histidine 106. Histidine 106 functions as the Proton donor in the catalytic mechanism. 108–110 (NVR) contributes to the substrate binding site. 2 residues coordinate a divalent metal cation: histidine 145 and histidine 175. The interval 239 to 274 (YVEFNLVYDRGTLFGLQSGGRAESILMSLPPRVRWE) is important for dimerization. 257–259 (GGR) is a binding site for substrate.

The protein belongs to the aerobic coproporphyrinogen-III oxidase family. As to quaternary structure, homodimer. A divalent metal cation serves as cofactor.

The protein localises to the cytoplasm. It catalyses the reaction coproporphyrinogen III + O2 + 2 H(+) = protoporphyrinogen IX + 2 CO2 + 2 H2O. Its pathway is porphyrin-containing compound metabolism; protoporphyrin-IX biosynthesis; protoporphyrinogen-IX from coproporphyrinogen-III (O2 route): step 1/1. Functionally, involved in the heme biosynthesis. Catalyzes the aerobic oxidative decarboxylation of propionate groups of rings A and B of coproporphyrinogen-III to yield the vinyl groups in protoporphyrinogen-IX. In Xanthomonas euvesicatoria pv. vesicatoria (strain 85-10) (Xanthomonas campestris pv. vesicatoria), this protein is Oxygen-dependent coproporphyrinogen-III oxidase.